The primary structure comprises 946 residues: Bifunctional glutamine synthetase adenylyltransferase/adenylyl-removing enzyme (946 aa).

Positions 1–440 are adenylyl removase; it reads MKPLSSPLQQ…VFNELIGDDE (440 aa). The segment at 449–946 is adenylyl transferase; sequence SEQWRELWQD…ASWQKWLVEE (498 aa).

The protein belongs to the GlnE family. Mg(2+) serves as cofactor.

It catalyses the reaction [glutamine synthetase]-O(4)-(5'-adenylyl)-L-tyrosine + phosphate = [glutamine synthetase]-L-tyrosine + ADP. The catalysed reaction is [glutamine synthetase]-L-tyrosine + ATP = [glutamine synthetase]-O(4)-(5'-adenylyl)-L-tyrosine + diphosphate. In terms of biological role, involved in the regulation of glutamine synthetase GlnA, a key enzyme in the process to assimilate ammonia. When cellular nitrogen levels are high, the C-terminal adenylyl transferase (AT) inactivates GlnA by covalent transfer of an adenylyl group from ATP to specific tyrosine residue of GlnA, thus reducing its activity. Conversely, when nitrogen levels are low, the N-terminal adenylyl removase (AR) activates GlnA by removing the adenylyl group by phosphorolysis, increasing its activity. The regulatory region of GlnE binds the signal transduction protein PII (GlnB) which indicates the nitrogen status of the cell. This Escherichia coli O81 (strain ED1a) protein is Bifunctional glutamine synthetase adenylyltransferase/adenylyl-removing enzyme.